Consider the following 827-residue polypeptide: SH3-containing GRB2-like protein 3-interacting protein 1 (827 aa).

Disordered regions lie at residues 1–116 (MMEG…SHKK), 143–199 (IGNI…ALAP), and 223–278 (IWGS…QAAT). 2 stretches are compositionally biased toward basic and acidic residues: residues 16–32 (RKKE…DRDG) and 40–53 (LPYH…REGG). Ser-78, Ser-104, Ser-105, Ser-107, Ser-149, Ser-151, Ser-156, and Ser-169 each carry phosphoserine. A phosphothreonine mark is found at Thr-180 and Thr-182. At Ser-236 the chain carries Phosphoserine. A compositionally biased stretch (pro residues) spans 245–260 (TGTPPPLPPKTVPATP). Phosphothreonine is present on residues Thr-247 and Thr-259. 6 positions are modified to phosphoserine: Ser-265, Ser-287, Ser-289, Ser-300, Ser-316, and Ser-319. Residues 265-276 (SPLTVATGNDQA) show a composition bias toward polar residues. Residues 315–505 (FSDASPEHVT…IAPLARAEST (191 aa)) form a disordered region. Residues 319–333 (SPEHVTPELTPREKV) are compositionally biased toward basic and acidic residues. Phosphothreonine occurs at positions 324, 328, and 335. Positions 335–345 (TPPAASDIPAD) are enriched in low complexity. Positions 346-369 (SPTPGPPGPPGSAGPPGPPGPRNV) are enriched in pro residues. A Phosphoserine modification is found at Ser-371. Residues 377–392 (EVQKKVAEQTFIKDDY) show a composition bias toward basic and acidic residues. A Phosphoserine modification is found at Ser-398. Thr-409 bears the Phosphothreonine mark. The segment covering 436 to 455 (ASGASSPARPATPLVPCSCS) has biased composition (low complexity). Over residues 456–474 (TPPPPPPRPPSRPKLPPGK) the composition is skewed to pro residues. Low complexity predominate over residues 481–491 (SRPFSPPIHSS). At Ser-485 the chain carries Phosphoserine. In terms of domain architecture, MHD spans 558–826 (TLPVAAAFTE…RFAAGKYLAD (269 aa)). 4 interaction with DPF motifs-containing proteins regions span residues 560 to 566 (PVAAAFT), 592 to 594 (SFP), 666 to 669 (TYYN), and 812 to 817 (SLIKKR). The interval 648 to 827 (MPNLMTHLKK…FAAGKYLADN (180 aa)) is necessary and sufficient to mediate interaction with CANX.

As to quaternary structure, interacts with proteins essential or regulating the formation of functional clathrin-coated pits. Interacts with CANX. Interacts with AP2A1. Interacts with EPS15. Interacts with SH3GL3. Interacts with AMPH. Interacts with ITSN1 (via SH3 domains). Interacts with and REPS1. In terms of tissue distribution, specifically expressed in brain. Also detected at lower levels in spleen and adipose tissue.

The protein resides in the membrane. Its subcellular location is the clathrin-coated pit. In terms of biological role, may function in clathrin-mediated endocytosis. Has both a membrane binding/tubulating activity and the ability to recruit proteins essential to the formation of functional clathrin-coated pits. Has a preference for membranes enriched in phosphatidylserine and phosphoinositides and is required for the endocytosis of the transferrin receptor. May also bind tubulin. May play a role in the regulation of energy homeostasis. The protein is SH3-containing GRB2-like protein 3-interacting protein 1 (SGIP1) of Psammomys obesus (Fat sand rat).